A 180-amino-acid chain; its full sequence is ADP-ribosylation factor 4 (180 aa).

Glycine 2 carries N-myristoyl glycine lipidation. GTP-binding positions include 24-31, 67-71, and 126-129; these read GLDAAGKT, DVGGQ, and NKQD. Position 147 is a phosphoserine (serine 147).

The protein belongs to the small GTPase superfamily. Arf family. Forms a complex containing RAB11A, ASAP1, RAB3IP, RAP11FIP3 and ARF4; the complex promotes preciliary trafficking; the complex binds to RHO in photoreceptor cells and promotes RHO ciliary transport.

Its subcellular location is the golgi apparatus. It is found in the membrane. Functionally, GTP-binding protein that functions as an allosteric activator of the cholera toxin catalytic subunit, an ADP-ribosyltransferase. Involved in protein trafficking; may modulate vesicle budding and uncoating within the Golgi apparatus. Part of the ciliary targeting complex containing Rab11, ASAP1, Rabin8/RAB3IP, RAB11FIP3 and ARF4, which direct preciliary vesicle trafficking to mother centriole and ciliogenesis initiation. This is ADP-ribosylation factor 4 (Arf4) from Mus musculus (Mouse).